The sequence spans 183 residues: Glutathione-regulated potassium-efflux system ancillary protein KefG (183 aa).

It belongs to the NAD(P)H dehydrogenase (quinone) family. KefG subfamily. Interacts with KefB.

It localises to the cell inner membrane. The enzyme catalyses a quinone + NADH + H(+) = a quinol + NAD(+). The catalysed reaction is a quinone + NADPH + H(+) = a quinol + NADP(+). Regulatory subunit of a potassium efflux system that confers protection against electrophiles. Required for full activity of KefB. The protein is Glutathione-regulated potassium-efflux system ancillary protein KefG of Pectobacterium atrosepticum (strain SCRI 1043 / ATCC BAA-672) (Erwinia carotovora subsp. atroseptica).